A 545-amino-acid chain; its full sequence is Chaperonin GroEL (545 aa).

ATP-binding positions include 30 to 33, lysine 51, 87 to 91, glycine 415, and aspartate 496; these read TLGP and DGTTT. The disordered stretch occupies residues 526-545; that stretch reads PEPKAPAGGMPDMGGMGGMM. Gly residues predominate over residues 536–545; sequence PDMGGMGGMM.

The protein belongs to the chaperonin (HSP60) family. Forms a cylinder of 14 subunits composed of two heptameric rings stacked back-to-back. Interacts with the co-chaperonin GroES.

It is found in the cytoplasm. The catalysed reaction is ATP + H2O + a folded polypeptide = ADP + phosphate + an unfolded polypeptide.. Together with its co-chaperonin GroES, plays an essential role in assisting protein folding. The GroEL-GroES system forms a nano-cage that allows encapsulation of the non-native substrate proteins and provides a physical environment optimized to promote and accelerate protein folding. This Paracoccus denitrificans (strain Pd 1222) protein is Chaperonin GroEL.